Consider the following 461-residue polypeptide: Argininosuccinate lyase (461 aa).

Belongs to the lyase 1 family. Argininosuccinate lyase subfamily.

Its subcellular location is the cytoplasm. The catalysed reaction is 2-(N(omega)-L-arginino)succinate = fumarate + L-arginine. It participates in amino-acid biosynthesis; L-arginine biosynthesis; L-arginine from L-ornithine and carbamoyl phosphate: step 3/3. This Streptococcus gordonii (strain Challis / ATCC 35105 / BCRC 15272 / CH1 / DL1 / V288) protein is Argininosuccinate lyase.